The sequence spans 444 residues: Phosphoglucosamine mutase (444 aa).

The active-site Phosphoserine intermediate is S104. Mg(2+) is bound by residues S104, D243, D245, and D247. Phosphoserine is present on S104.

It belongs to the phosphohexose mutase family. It depends on Mg(2+) as a cofactor. Activated by phosphorylation.

The enzyme catalyses alpha-D-glucosamine 1-phosphate = D-glucosamine 6-phosphate. Functionally, catalyzes the conversion of glucosamine-6-phosphate to glucosamine-1-phosphate. The protein is Phosphoglucosamine mutase of Neisseria meningitidis serogroup A / serotype 4A (strain DSM 15465 / Z2491).